Here is a 285-residue protein sequence, read N- to C-terminus: uncharacterized protein (285 aa).

7 helical membrane passes run 6–26, 38–58, 84–104, 110–130, 153–173, 176–196, and 236–256; these read YLVV…TPLI, VFAA…YIFP, IFLL…IFLR, GVLA…ELIF, FMMH…DDGF, ISFF…ALMV, and LIFG…TVLV.

The protein resides in the cell membrane. This is an uncharacterized protein from Mycoplasma pneumoniae (strain ATCC 29342 / M129 / Subtype 1) (Mycoplasmoides pneumoniae).